Reading from the N-terminus, the 304-residue chain is tRNA pseudouridine synthase B (304 aa).

D38 serves as the catalytic Nucleophile.

Belongs to the pseudouridine synthase TruB family. Type 1 subfamily.

It catalyses the reaction uridine(55) in tRNA = pseudouridine(55) in tRNA. In terms of biological role, responsible for synthesis of pseudouridine from uracil-55 in the psi GC loop of transfer RNAs. The chain is tRNA pseudouridine synthase B from Listeria innocua serovar 6a (strain ATCC BAA-680 / CLIP 11262).